A 1159-amino-acid polypeptide reads, in one-letter code: WASH complex subunit 5 (1159 aa).

This sequence belongs to the strumpellin family. Component of the WASH core complex also described as WASH regulatory complex (SHRC) composed of WASH (WASHC1, WASH2P or WASH3P), WASHC2 (WASHC2A or WASHC2C), WASHC3, WASHC4 and WASHC5. The WASH core complex associates via WASHC2 with the F-actin-capping protein dimer (formed by CAPZA1, CAPZA2 or CAPZA3 and CAPZB) in a transient or substoichiometric manner which was initially described as WASH complex. Interacts with VCP, PI4K2A.

It is found in the cytoplasm. Its subcellular location is the cytosol. The protein resides in the endoplasmic reticulum. The protein localises to the early endosome. In terms of biological role, acts as a component of the WASH core complex that functions as a nucleation-promoting factor (NPF) at the surface of endosomes, where it recruits and activates the Arp2/3 complex to induce actin polymerization, playing a key role in the fission of tubules that serve as transport intermediates during endosome sorting. May be involved in axonal outgrowth. Involved in cellular localization of ADRB2. Involved in cellular trafficking of BLOC-1 complex cargos such as ATP7A and VAMP7. Involved in cytokinesis and following polar body extrusion during oocyte meiotic maturation. This is WASH complex subunit 5 from Mus musculus (Mouse).